The sequence spans 133 residues: Large ribosomal subunit protein eL32z (133 aa).

The protein belongs to the eukaryotic ribosomal protein eL32 family.

The protein is Large ribosomal subunit protein eL32z (RPL32A) of Arabidopsis thaliana (Mouse-ear cress).